Reading from the N-terminus, the 284-residue chain is MEMO1 family protein YG5714_2180 (284 aa).

It belongs to the MEMO1 family.

The polypeptide is MEMO1 family protein YG5714_2180 (Saccharolobus islandicus (strain Y.G.57.14 / Yellowstone #1) (Sulfolobus islandicus)).